The following is a 232-amino-acid chain: Thiamine import ATP-binding protein ThiQ (232 aa).

The ABC transporter domain maps to L2–I230. G32–S39 contributes to the ATP binding site.

Belongs to the ABC transporter superfamily. Thiamine importer (TC 3.A.1.19.1) family. The complex is composed of two ATP-binding proteins (ThiQ), two transmembrane proteins (ThiP) and a solute-binding protein (ThiB).

The protein resides in the cell inner membrane. The enzyme catalyses thiamine(out) + ATP + H2O = thiamine(in) + ADP + phosphate + H(+). Part of the ABC transporter complex ThiBPQ involved in thiamine import. Responsible for energy coupling to the transport system. This is Thiamine import ATP-binding protein ThiQ from Escherichia coli O6:K15:H31 (strain 536 / UPEC).